We begin with the raw amino-acid sequence, 326 residues long: Regulation of nuclear pre-mRNA domain-containing protein 1B (326 aa).

Position 2 is an N-acetylserine (serine 2). The CID domain occupies 2–133; that stretch reads SSFSESALEK…QLKLSMEDSK (132 aa). Residues 127-149 form a disordered region; that stretch reads LSMEDSKSPPPKATEEKKSLKRT. A compositionally biased stretch (basic and acidic residues) spans 128–144; that stretch reads SMEDSKSPPPKATEEKK. 2 positions are modified to phosphoserine: serine 132 and serine 134. A Phosphotyrosine modification is found at tyrosine 161. A phosphoserine mark is found at serine 166 and serine 299.

The protein belongs to the UPF0400 (RTT103) family. Homodimer. May form a heterodimer with RPRD1A. Associates with RPAP2. Associates with the RNA polymerase II complex. Preferentially expressed in a range of tumor tissues including colon, lung, liver, breast, prostate, stomach, uterine endometrium and cervical cancers with higher levels in tumors than in adjacent non-tumor tissue (at protein level).

The protein resides in the nucleus. Its function is as follows. Interacts with phosphorylated C-terminal heptapeptide repeat domain (CTD) of the largest RNA polymerase II subunit POLR2A, and participates in dephosphorylation of the CTD by RPAP2. Transcriptional regulator which enhances expression of CCND1. Promotes binding of RNA polymerase II to the CCDN1 promoter and to the termination region before the poly-A site but decreases its binding after the poly-A site. Prevents RNA polymerase II from reading through the 3' end termination site and may allow it to be recruited back to the promoter through promotion of the formation of a chromatin loop. Also enhances the transcription of a number of other cell cycle-related genes including CDK2, CDK4, CDK6 and cyclin-E but not CDKN1A, CDKN1B or cyclin-A. Promotes cell proliferation. The polypeptide is Regulation of nuclear pre-mRNA domain-containing protein 1B (RPRD1B) (Homo sapiens (Human)).